Here is a 201-residue protein sequence, read N- to C-terminus: Lipopolysaccharide core heptose(II)-phosphate phosphatase (201 aa).

The first 35 residues, 1–35, serve as a signal peptide directing secretion; it reads MLAFTLRFIKNKRYLATLAGALVIIAGLTSQHAWS.

It belongs to the phosphoglycerate mutase family. Ais subfamily.

The protein resides in the periplasm. Its pathway is bacterial outer membrane biogenesis; lipopolysaccharide metabolism. Its function is as follows. Catalyzes the dephosphorylation of heptose(II) of the outer membrane lipopolysaccharide core. The protein is Lipopolysaccharide core heptose(II)-phosphate phosphatase of Salmonella choleraesuis (strain SC-B67).